We begin with the raw amino-acid sequence, 511 residues long: Probable dolichyl pyrophosphate Glc1Man9GlcNAc2 alpha-1,3-glucosyltransferase (511 aa).

Transmembrane regions (helical) follow at residues 4–24, 94–112, 124–144, 151–171, 210–230, 300–320, 332–352, 356–370, 377–394, 432–452, and 469–491; these read LFWHLVGIATGLKILLIPAYH, VYFQRLSVIVTDLVYVLGV, DTQQFFAASMLLLLNVGLIFV, YNGLLFGILLLSIGSLIRQRF, VVSAVGAVVKLLVVGLTPFAV, PAITPPVTFALTALFMLPILV, LVFLRAVVLCGCSSFVFGWHV, AILMVLLPLCLLTLV, YAYVLGIAGYFSLFPLLF, WLYMLGFMAIPLYEHLLSFLL, and YSALGVLYFFGAYYLYALGISWG.

This sequence belongs to the ALG6/ALG8 glucosyltransferase family.

Its subcellular location is the endoplasmic reticulum membrane. It catalyses the reaction an alpha-D-Glc-(1-&gt;3)-alpha-D-Man-(1-&gt;2)-alpha-D-Man-(1-&gt;2)-alpha-D-Man-(1-&gt;3)-[alpha-D-Man-(1-&gt;2)-alpha-D-Man-(1-&gt;3)-[alpha-D-Man-(1-&gt;2)-alpha-D-Man-(1-&gt;6)]-alpha-D-Man-(1-&gt;6)]-beta-D-Man-(1-&gt;4)-beta-D-GlcNAc-(1-&gt;4)-alpha-D-GlcNAc-diphospho-di-trans,poly-cis-dolichol + a di-trans,poly-cis-dolichyl beta-D-glucosyl phosphate = an alpha-D-Glc-(1-&gt;3)-alpha-D-Glc-(1-&gt;3)-alpha-D-Man-(1-&gt;2)-alpha-D-Man-(1-&gt;2)-alpha-D-Man-(1-&gt;3)-[alpha-D-Man-(1-&gt;2)-alpha-D-Man-(1-&gt;3)-[alpha-D-Man-(1-&gt;2)-alpha-D-Man-(1-&gt;6)]-alpha-D-Man-(1-&gt;6)]-beta-D-Man-(1-&gt;4)-beta-D-GlcNAc-(1-&gt;4)-alpha-D-GlcNAc-diphospho-di-trans,poly-cis-dolichol + a di-trans,poly-cis-dolichyl phosphate + H(+). Its pathway is protein modification; protein glycosylation. Functionally, adds the second glucose residue to the lipid-linked oligosaccharide precursor for N-linked glycosylation. Transfers glucose from dolichyl phosphate glucose (Dol-P-Glc) onto the lipid-linked oligosaccharide Glc(1)Man(9)GlcNAc(2)-PP-Dol. Functions in developmental processes such as germband extension, the apical constriction of mesoderm precursor cells and ventral furrow formation in early embryogenesis prior to gastrulation. Involved in the glycosylation and intracellular distribution of shg (E-cadherin). Function in cell intercalation in the lateral epidermis during germband extension may be due to its effect on shg. The sequence is that of Probable dolichyl pyrophosphate Glc1Man9GlcNAc2 alpha-1,3-glucosyltransferase from Drosophila melanogaster (Fruit fly).